Reading from the N-terminus, the 399-residue chain is Immunoglobulin heavy constant gamma 1 (399 aa).

Residues Ala-1–Gly-21 are disordered. The CH1 stretch occupies residues Ala-1 to Val-98. At Ala-1–Thr-350 the chain is on the extracellular side. Ig-like domains are found at residues Pro-6 to Glu-99, Pro-121 to Ser-220, and Pro-229 to Ser-325. Cys-27 and Cys-83 are disulfide-bonded. Residues Glu-99–Pro-110 are hinge. The tract at residues Pro-111–Lys-223 is CH2. Cystine bridges form between Cys-144–Cys-204 and Cys-250–Cys-308. Residue Asn-180 is glycosylated (N-linked (GlcNAc...) (complex) asparagine). The tract at residues Gly-224–Leu-330 is CH3. Residues Ile-351–Phe-371 traverse the membrane as a helical segment. The Cytoplasmic portion of the chain corresponds to Lys-372 to Ala-399.

As to quaternary structure, immunoglobulins are composed of two identical heavy chains and two identical light chains; disulfide-linked. Interacts with FCGR1A; this interaction mediates IgG effector functions on monocytes. Interacts with FCGR2A and FCGR3A. In terms of processing, glycosylation on Asn-180 is required for interaction with Fc receptors and ability to activate the complement pathway. Post-translationally, (Microbial infection) Deglycosylation on Asn-180 by S.pyogenes EndoS or Endos2 endoglucosidases prevents interaction between immunoglobulin-gamma (IgG) and Fc receptors, impairing ability to activate the complement pathway.

The protein resides in the secreted. The protein localises to the cell membrane. Constant region of immunoglobulin heavy chains. Immunoglobulins, also known as antibodies, are membrane-bound or secreted glycoproteins produced by B lymphocytes. In the recognition phase of humoral immunity, the membrane-bound immunoglobulins serve as receptors which, upon binding of a specific antigen, trigger the clonal expansion and differentiation of B lymphocytes into immunoglobulins-secreting plasma cells. Secreted immunoglobulins mediate the effector phase of humoral immunity, which results in the elimination of bound antigens. The antigen binding site is formed by the variable domain of one heavy chain, together with that of its associated light chain. Thus, each immunoglobulin has two antigen binding sites with remarkable affinity for a particular antigen. The variable domains are assembled by a process called V-(D)-J rearrangement and can then be subjected to somatic hypermutations which, after exposure to antigen and selection, allow affinity maturation for a particular antigen. Mediates IgG effector functions on monocytes triggering ADCC of virus-infected cells. The chain is Immunoglobulin heavy constant gamma 1 from Homo sapiens (Human).